Reading from the N-terminus, the 183-residue chain is Isopentenyl-diphosphate Delta-isomerase (183 aa).

Residues His-26 and His-33 each coordinate Mn(2+). One can recognise a Nudix hydrolase domain in the interval 31–169; it reads PLHFAFSCYV…PFAFSPWMVE (139 aa). Cys-68 is a catalytic residue. Cys-68 contacts Mg(2+). A Mn(2+)-binding site is contributed by His-70. Glu-88 is a Mg(2+) binding site. Mn(2+) contacts are provided by Glu-118 and Glu-120. Glu-120 is an active-site residue.

It belongs to the IPP isomerase type 1 family. Mg(2+) serves as cofactor. It depends on Mn(2+) as a cofactor.

It is found in the cytoplasm. It carries out the reaction isopentenyl diphosphate = dimethylallyl diphosphate. Its pathway is isoprenoid biosynthesis; dimethylallyl diphosphate biosynthesis; dimethylallyl diphosphate from isopentenyl diphosphate: step 1/1. Catalyzes the 1,3-allylic rearrangement of the homoallylic substrate isopentenyl (IPP) to its highly electrophilic allylic isomer, dimethylallyl diphosphate (DMAPP). In Corynebacterium diphtheriae (strain ATCC 700971 / NCTC 13129 / Biotype gravis), this protein is Isopentenyl-diphosphate Delta-isomerase.